A 237-amino-acid polypeptide reads, in one-letter code: MPVTQDVFNEDGKFMRKIRSFVRREGRLTKGQEKALEELWPVMGIDFAPEPLDLVALFGREAPVVLEIGFGMGASLVEMAKNAPEKNFIGIEVHSPGVGACLGTAQEAGVTNLRVICHDAVEVLEHMIPNGSLACLQLFFPDPWHKSRHHKRRIVQPAFVQDIRQKLAIGGVFHMATDWENYAEHMLEVMSAAEGYENTSATGNWVPRPDWRPLTKFEQRGHRLGHGVWDLIFKRVN.

S-adenosyl-L-methionine contacts are provided by glutamate 67, glutamate 92, aspartate 119, and aspartate 142. The active site involves aspartate 142. Substrate contacts are provided by residues lysine 146, aspartate 178, and 215 to 218 (TKFE).

This sequence belongs to the class I-like SAM-binding methyltransferase superfamily. TrmB family.

The enzyme catalyses guanosine(46) in tRNA + S-adenosyl-L-methionine = N(7)-methylguanosine(46) in tRNA + S-adenosyl-L-homocysteine. The protein operates within tRNA modification; N(7)-methylguanine-tRNA biosynthesis. Catalyzes the formation of N(7)-methylguanine at position 46 (m7G46) in tRNA. This Aeromonas hydrophila subsp. hydrophila (strain ATCC 7966 / DSM 30187 / BCRC 13018 / CCUG 14551 / JCM 1027 / KCTC 2358 / NCIMB 9240 / NCTC 8049) protein is tRNA (guanine-N(7)-)-methyltransferase.